The chain runs to 160 residues: Transcription antitermination protein NusB (160 aa).

Belongs to the NusB family.

In terms of biological role, involved in transcription antitermination. Required for transcription of ribosomal RNA (rRNA) genes. Binds specifically to the boxA antiterminator sequence of the ribosomal RNA (rrn) operons. The sequence is that of Transcription antitermination protein NusB from Rhizobium etli (strain CIAT 652).